A 505-amino-acid polypeptide reads, in one-letter code: ATP synthase subunit alpha (505 aa).

170–177 (GDRQTGKT) serves as a coordination point for ATP.

Belongs to the ATPase alpha/beta chains family. F-type ATPases have 2 components, CF(1) - the catalytic core - and CF(0) - the membrane proton channel. CF(1) has five subunits: alpha(3), beta(3), gamma(1), delta(1), epsilon(1). CF(0) has four main subunits: a(1), b(1), b'(1) and c(9-12).

It is found in the cellular thylakoid membrane. It catalyses the reaction ATP + H2O + 4 H(+)(in) = ADP + phosphate + 5 H(+)(out). Its function is as follows. Produces ATP from ADP in the presence of a proton gradient across the membrane. The alpha chain is a regulatory subunit. In Prochlorococcus marinus (strain SARG / CCMP1375 / SS120), this protein is ATP synthase subunit alpha.